The chain runs to 284 residues: Efem/EfeO family lipoprotein (284 aa).

A signal peptide spans 1–17 (MKKLTTLLLASTLLIAA). A lipid anchor (N-palmitoyl cysteine) is attached at cysteine 18. The S-diacylglycerol cysteine moiety is linked to residue cysteine 18.

The protein belongs to the EfeM/EfeO family.

The protein localises to the cell membrane. This is Efem/EfeO family lipoprotein from Staphylococcus aureus (strain USA300).